The sequence spans 77 residues: MKLIILTGLVLFAIVSFIEAEEETGRACILLYGECTKASGSCCSNLICDCYRKLKKGVQIARQCFCLEKDVVYKKHI.

Positions Met1–Ala20 are cleaved as a signal peptide. Residues Glu21–Arg26 constitute a propeptide that is removed on maturation.

Belongs to the neurotoxin 19 (CSTX) family. 10 (U11-Lctx) subfamily. Post-translationally, contains 4 disulfide bonds. In terms of tissue distribution, expressed by the venom gland.

It is found in the secreted. The chain is U11-lycotoxin-Ls1a from Lycosa singoriensis (Wolf spider).